The sequence spans 493 residues: Probable cytosol aminopeptidase (493 aa).

Lys-265 and Asp-270 together coordinate Mn(2+). Lys-277 is a catalytic residue. Mn(2+) is bound by residues Asp-288, Asp-347, and Glu-349. Residue Arg-351 is part of the active site.

The protein belongs to the peptidase M17 family. It depends on Mn(2+) as a cofactor.

The protein localises to the cytoplasm. It catalyses the reaction Release of an N-terminal amino acid, Xaa-|-Yaa-, in which Xaa is preferably Leu, but may be other amino acids including Pro although not Arg or Lys, and Yaa may be Pro. Amino acid amides and methyl esters are also readily hydrolyzed, but rates on arylamides are exceedingly low.. The enzyme catalyses Release of an N-terminal amino acid, preferentially leucine, but not glutamic or aspartic acids.. Functionally, presumably involved in the processing and regular turnover of intracellular proteins. Catalyzes the removal of unsubstituted N-terminal amino acids from various peptides. This is Probable cytosol aminopeptidase from Hydrogenovibrio crunogenus (strain DSM 25203 / XCL-2) (Thiomicrospira crunogena).